Here is a 568-residue protein sequence, read N- to C-terminus: Zinc finger protein 76 (568 aa).

Lysine 24 participates in a covalent cross-link: Glycyl lysine isopeptide (Lys-Gly) (interchain with G-Cter in SUMO2). 3 tandem repeats follow at residues 34–45 (IQLEDGTTAYIH), 62–73 (VQLEDGSMAYIH), and 88–99 (VQLEDGSTAYIH). The tract at residues 34–99 (IQLEDGTTAY…LEDGSTAYIH (66 aa)) is 3 X 12 AA approximate repeats. 7 consecutive C2H2-type zinc fingers follow at residues 165 to 189 (FRCG…ERAH), 195 to 219 (YRCD…VRTH), 225 to 249 (YKCP…VRTH), 255 to 279 (FRCP…VRTH), 285 to 309 (YTCP…VRIH), 315 to 339 (YVCT…HVVH), and 345 to 368 (YTCS…RSAH). The tract at residues 365–402 (RSAHGELEATEESEQALYEQQQLEAASAAEESPPPKPT) is disordered. A compositionally biased stretch (low complexity) spans 379 to 395 (QALYEQQQLEAASAAEE).

The protein belongs to the krueppel C2H2-type zinc-finger protein family.

The protein localises to the nucleus. Its function is as follows. May be involved in transcriptional regulation. The sequence is that of Zinc finger protein 76 (Znf76) from Mus musculus (Mouse).